The sequence spans 825 residues: Endoglucanase C (825 aa).

Positions 1 to 28 (MRNKLRRLLAIMMAVLLITSLFAPMVSA) are cleaved as a signal peptide. The active-site Proton donor is the Glu-219. The active-site Nucleophile is the Glu-335. The span at 607 to 621 (DRESVPEPVEHDTKG) shows a compositional bias: basic and acidic residues. Residues 607 to 635 (DRESVPEPVEHDTKGDSALPSDFEDGTRQ) form a disordered region.

Belongs to the glycosyl hydrolase 5 (cellulase A) family.

The catalysed reaction is Endohydrolysis of (1-&gt;4)-beta-D-glucosidic linkages in cellulose, lichenin and cereal beta-D-glucans.. This is Endoglucanase C (celC) from Evansella cellulosilytica (strain ATCC 21833 / DSM 2522 / FERM P-1141 / JCM 9156 / N-4) (Bacillus cellulosilyticus).